Reading from the N-terminus, the 284-residue chain is Pantothenate synthetase (284 aa).

30-37 (MGNLHNAH) contributes to the ATP binding site. His37 (proton donor) is an active-site residue. Gln61 lines the (R)-pantoate pocket. Gln61 provides a ligand contact to beta-alanine. An ATP-binding site is contributed by 149–152 (GIKD). Gln155 is a binding site for (R)-pantoate. ATP contacts are provided by residues Val178 and 186-189 (MSSR).

It belongs to the pantothenate synthetase family. In terms of assembly, homodimer.

The protein resides in the cytoplasm. It carries out the reaction (R)-pantoate + beta-alanine + ATP = (R)-pantothenate + AMP + diphosphate + H(+). It participates in cofactor biosynthesis; (R)-pantothenate biosynthesis; (R)-pantothenate from (R)-pantoate and beta-alanine: step 1/1. Catalyzes the condensation of pantoate with beta-alanine in an ATP-dependent reaction via a pantoyl-adenylate intermediate. This Saccharophagus degradans (strain 2-40 / ATCC 43961 / DSM 17024) protein is Pantothenate synthetase.